Reading from the N-terminus, the 296-residue chain is Immediate early response gene 5-like protein (296 aa).

The protein belongs to the IER family.

The protein is Immediate early response gene 5-like protein (ier5l) of Xenopus tropicalis (Western clawed frog).